The primary structure comprises 463 residues: Glutamyl-tRNA reductase (463 aa).

Substrate contacts are provided by residues 49 to 52 (TCNR), serine 109, 114 to 116 (EQQ), and glutamine 120. The active-site Nucleophile is the cysteine 50. An NADP(+)-binding site is contributed by 196-201 (GAGAMS).

Belongs to the glutamyl-tRNA reductase family. Homodimer.

It carries out the reaction (S)-4-amino-5-oxopentanoate + tRNA(Glu) + NADP(+) = L-glutamyl-tRNA(Glu) + NADPH + H(+). The protein operates within porphyrin-containing compound metabolism; protoporphyrin-IX biosynthesis; 5-aminolevulinate from L-glutamyl-tRNA(Glu): step 1/2. Catalyzes the NADPH-dependent reduction of glutamyl-tRNA(Glu) to glutamate 1-semialdehyde (GSA). The protein is Glutamyl-tRNA reductase of Corynebacterium glutamicum (strain ATCC 13032 / DSM 20300 / JCM 1318 / BCRC 11384 / CCUG 27702 / LMG 3730 / NBRC 12168 / NCIMB 10025 / NRRL B-2784 / 534).